A 68-amino-acid polypeptide reads, in one-letter code: Conotoxin Mr3.3 (68 aa).

Residues 1–19 (MSRLGVLLTICLLLFPLTA) form the signal peptide. Positions 20–51 (VPLDGDQPADRPAERLQDDISSEHHPHFDSGR) are excised as a propeptide. The tract at residues 22 to 46 (LDGDQPADRPAERLQDDISSEHHPH) is disordered. Positions 27–46 (PADRPAERLQDDISSEHHPH) are enriched in basic and acidic residues. 3 cysteine pairs are disulfide-bonded: cysteine 53/cysteine 67, cysteine 54/cysteine 63, and cysteine 59/cysteine 66. The residue at position 65 (proline 65) is a 4-hydroxyproline.

The protein belongs to the conotoxin M superfamily. As to expression, expressed by the venom duct.

Its subcellular location is the secreted. The polypeptide is Conotoxin Mr3.3 (Conus marmoreus (Marble cone)).